Reading from the N-terminus, the 158-residue chain is Cathelicidin-6 (158 aa).

The first 29 residues, 1-29 (METQRASLSLGRWSLWLLLLGLALPSASA), serve as a signal peptide directing secretion. The propeptide occupies 30-131 (QALSYREAVL…NVTCEELQSV (102 aa)). Cystine bridges form between Cys-86–Cys-97 and Cys-108–Cys-125.

It belongs to the cathelicidin family.

Its subcellular location is the secreted. Exerts a potent antimicrobial activity against Gram-negative and Gram-positive bacteria, including methicillin-resistant Staphylococcus aureus, and fungi. This is Cathelicidin-6 (CATHL6) from Bos taurus (Bovine).